The following is an 818-amino-acid chain: Structure-specific endonuclease subunit SLX4 (818 aa).

Disordered stretches follow at residues Met1–Ser39, Arg53–Asn151, Phe279–Ser324, Asn413–Lys437, and Met587–Glu712. Residues Val28–Ser39 are compositionally biased toward low complexity. Basic and acidic residues predominate over residues Pro90–Phe103. Residues Thr306–Thr316 show a composition bias toward low complexity. Residues Thr426–Lys437 show a composition bias toward polar residues. The span at Gln604–Ala618 shows a compositional bias: basic and acidic residues. 3 stretches are compositionally biased toward polar residues: residues Ser621–Gly640, Ser652–Val672, and Ser696–Glu712.

This sequence belongs to the SLX4 family. As to quaternary structure, forms a heterodimer with SLX1. In terms of processing, phosphorylated in response to DNA damage.

The protein localises to the nucleus. In terms of biological role, regulatory subunit of the SLX1-SLX4 structure-specific endonuclease that resolves DNA secondary structures generated during DNA repair and recombination. Has endonuclease activity towards branched DNA substrates, introducing single-strand cuts in duplex DNA close to junctions with ss-DNA. This Uncinocarpus reesii (strain UAMH 1704) protein is Structure-specific endonuclease subunit SLX4.